The chain runs to 393 residues: Protein TsgA (393 aa).

A run of 12 helical transmembrane segments spans residues 11–31 (WISF…GMVM), 51–71 (FLNA…EIVP), 78–98 (FGFL…SLAL), 101–121 (AAMF…TFLI), 134–154 (LLFT…IAAF), 162–182 (WYWV…LTFG), 206–226 (IGVL…LGFI), 245–265 (TLVS…SFIL), 273–293 (ILTV…TGTP), 297–317 (AWSI…IITL), 332–352 (FVLT…GPIV), and 361–381 (LLTA…LGFV).

The protein belongs to the major facilitator superfamily. TsgA family.

It is found in the cell inner membrane. In Escherichia coli O7:K1 (strain IAI39 / ExPEC), this protein is Protein TsgA.